The following is a 132-amino-acid chain: D-ribose pyranase (132 aa).

His-20 functions as the Proton donor in the catalytic mechanism. Substrate-binding positions include Asp-28, His-99, and Tyr-121 to Asn-123.

Belongs to the RbsD / FucU family. RbsD subfamily. Homodecamer.

Its subcellular location is the cytoplasm. It carries out the reaction beta-D-ribopyranose = beta-D-ribofuranose. It functions in the pathway carbohydrate metabolism; D-ribose degradation; D-ribose 5-phosphate from beta-D-ribopyranose: step 1/2. In terms of biological role, catalyzes the interconversion of beta-pyran and beta-furan forms of D-ribose. This Lactococcus lactis subsp. cremoris (strain SK11) protein is D-ribose pyranase.